The chain runs to 100 residues: Small ribosomal subunit protein uS14c (100 aa).

This sequence belongs to the universal ribosomal protein uS14 family. Part of the 30S ribosomal subunit.

The protein localises to the plastid. The protein resides in the chloroplast. Its function is as follows. Binds 16S rRNA, required for the assembly of 30S particles. In Morus indica (Mulberry), this protein is Small ribosomal subunit protein uS14c.